The primary structure comprises 217 residues: Probable transaldolase (217 aa).

Residue Lys-83 is the Schiff-base intermediate with substrate of the active site.

This sequence belongs to the transaldolase family. Type 3B subfamily.

The protein localises to the cytoplasm. It carries out the reaction D-sedoheptulose 7-phosphate + D-glyceraldehyde 3-phosphate = D-erythrose 4-phosphate + beta-D-fructose 6-phosphate. It functions in the pathway carbohydrate degradation; pentose phosphate pathway; D-glyceraldehyde 3-phosphate and beta-D-fructose 6-phosphate from D-ribose 5-phosphate and D-xylulose 5-phosphate (non-oxidative stage): step 2/3. In terms of biological role, transaldolase is important for the balance of metabolites in the pentose-phosphate pathway. This chain is Probable transaldolase, found in Bartonella bacilliformis (strain ATCC 35685 / KC583 / Herrer 020/F12,63).